The sequence spans 189 residues: Ribosome maturation factor RimM (189 aa).

The PRC barrel domain maps to 95–177 (EDDEFYYADL…AGLVDDPEEL (83 aa)).

This sequence belongs to the RimM family. In terms of assembly, binds ribosomal protein uS19.

The protein localises to the cytoplasm. Functionally, an accessory protein needed during the final step in the assembly of 30S ribosomal subunit, possibly for assembly of the head region. Essential for efficient processing of 16S rRNA. May be needed both before and after RbfA during the maturation of 16S rRNA. It has affinity for free ribosomal 30S subunits but not for 70S ribosomes. The polypeptide is Ribosome maturation factor RimM (Rhizobium leguminosarum bv. trifolii (strain WSM2304)).